Here is a 320-residue protein sequence, read N- to C-terminus: Aspartate carbamoyltransferase catalytic subunit (320 aa).

R68 and T69 together coordinate carbamoyl phosphate. K96 contacts L-aspartate. Residues R118, H148, and Q151 each contribute to the carbamoyl phosphate site. The L-aspartate site is built by R181 and R236. Positions 277 and 278 each coordinate carbamoyl phosphate.

It belongs to the aspartate/ornithine carbamoyltransferase superfamily. ATCase family. Heterododecamer (2C3:3R2) of six catalytic PyrB chains organized as two trimers (C3), and six regulatory PyrI chains organized as three dimers (R2).

It carries out the reaction carbamoyl phosphate + L-aspartate = N-carbamoyl-L-aspartate + phosphate + H(+). It participates in pyrimidine metabolism; UMP biosynthesis via de novo pathway; (S)-dihydroorotate from bicarbonate: step 2/3. Its function is as follows. Catalyzes the condensation of carbamoyl phosphate and aspartate to form carbamoyl aspartate and inorganic phosphate, the committed step in the de novo pyrimidine nucleotide biosynthesis pathway. This chain is Aspartate carbamoyltransferase catalytic subunit, found in Polaromonas sp. (strain JS666 / ATCC BAA-500).